A 778-amino-acid chain; its full sequence is Tastin (778 aa).

The segment covering 1-11 (MTTRQATKDPL) has biased composition (basic and acidic residues). The disordered stretch occupies residues 1–115 (MTTRQATKDP…PGPPAQTEAP (115 aa)). Residues S16, S98, and S170 each carry the phosphoserine modification. Positions 212–244 (ISPSGPSFHPSTRPSFQELRRETAGSSRTSVSQ) are disordered. Residues 235–244 (AGSSRTSVSQ) show a composition bias toward polar residues. Residues S324, S334, S344, and S362 each carry the phosphoserine modification. T363 is subject to Phosphothreonine. A Phosphoserine modification is found at S376. Disordered regions lie at residues 406–425 (EGSG…NRTP), 508–587 (ECGE…AEPR), and 600–641 (PESS…RVEL). Residues 513–523 (QPCPPAEPGPP) show a composition bias toward pro residues. 4 consecutive repeat copies span residues 516–548 (PPAE…PEPY), 549–581 (PPAE…PEPC), 582–614 (PPAE…PEPC), and 615–647 (PPAE…SEPC). The segment at 516-647 (PPAEPGPPEA…RVELGASEPC (132 aa)) is 4 X 33 AA approximate tandem repeats. Residues 560–574 (CRSEPEIPESSRQEQ) are compositionally biased toward basic and acidic residues. Residues 612-622 (EPCPPAEPGPL) are compositionally biased toward pro residues.

As to quaternary structure, directly binds bystin, and indirectly trophinin. Strong expression at implantation sites. Was exclusively localized to the apical side of the syncytiotrophoblast. Also found in macrophages.

It is found in the cytoplasm. In terms of biological role, could be involved with bystin and trophinin in a cell adhesion molecule complex that mediates an initial attachment of the blastocyst to uterine epithelial cells at the time of the embryo implantation. The polypeptide is Tastin (TROAP) (Homo sapiens (Human)).